The following is a 689-amino-acid chain: Glycine--tRNA ligase beta subunit (689 aa).

The protein belongs to the class-II aminoacyl-tRNA synthetase family. In terms of assembly, tetramer of two alpha and two beta subunits.

It is found in the cytoplasm. It carries out the reaction tRNA(Gly) + glycine + ATP = glycyl-tRNA(Gly) + AMP + diphosphate. The chain is Glycine--tRNA ligase beta subunit (glyS) from Coxiella burnetii (strain RSA 493 / Nine Mile phase I).